We begin with the raw amino-acid sequence, 181 residues long: High mobility group protein B4 (181 aa).

Residues 9 to 79 (PKVNVSSYIH…RYQQEMMNYI (71 aa)) constitute a DNA-binding region (HMG box 1). The segment covering 80 to 89 (GKRRKRRKRD) has biased composition (basic residues). The disordered stretch occupies residues 80–100 (GKRRKRRKRDPKAPRKPPSSF). Positions 93-161 (PRKPPSSFLL…KYFEEQEAYR (69 aa)) form a DNA-binding region, HMG box 2.

The protein belongs to the HMGB family. As to expression, expressed in adult germ cells (at protein level).

Its subcellular location is the nucleus. The protein localises to the chromosome. This is High mobility group protein B4 (Hmgb4) from Mus musculus (Mouse).